A 506-amino-acid polypeptide reads, in one-letter code: Galactose/methyl galactoside import ATP-binding protein MglA (506 aa).

ABC transporter domains follow at residues Leu-14–Ser-249 and Val-264–Leu-506. Residue Gly-46–Ser-53 coordinates ATP.

The protein belongs to the ABC transporter superfamily. Galactose/methyl galactoside importer (TC 3.A.1.2.3) family. As to quaternary structure, the complex is composed of one ATP-binding protein (MglA), two transmembrane proteins (MglC) and a solute-binding protein (MglB).

It localises to the cell inner membrane. The catalysed reaction is D-galactose(out) + ATP + H2O = D-galactose(in) + ADP + phosphate + H(+). The enzyme catalyses methyl beta-D-galactoside(out) + ATP + H2O = methyl beta-D-galactoside(in) + ADP + phosphate + H(+). Its function is as follows. Part of the ABC transporter complex MglABC involved in galactose/methyl galactoside import. Responsible for energy coupling to the transport system. The chain is Galactose/methyl galactoside import ATP-binding protein MglA from Escherichia coli O6:K15:H31 (strain 536 / UPEC).